A 1235-amino-acid chain; its full sequence is Insulin receptor substrate 1 (1235 aa).

Ser3 carries the phosphoserine modification. A mediates interaction with PHIP region spans residues 3–133 (SPPDTDGFSD…AGGGCGGSCS (131 aa)). Residues 12 to 115 (DVRKVGYLRK…WYQALLQLHN (104 aa)) form the PH domain. Ser99 is modified (phosphoserine; by CK2). Residues 155–259 (FKEVWQVILK…EAMRAMSDEF (105 aa)) form the IRS-type PTB domain. The segment at 258–425 (EFRPRTKSQS…SDGGFISSDE (168 aa)) is disordered. Ser265 and Ser302 each carry phosphoserine; by RPS6KB1. A compositionally biased stretch (low complexity) spans 265–276 (SQSSSSCSNPIS). Ser307 carries the phosphoserine; by IKKB, MAPK8 and RPS6KB1 modification. Phosphoserine occurs at positions 318, 325, 340, and 343. Basic residues predominate over residues 349–358 (THAHRHRGSS). 2 stretches are compositionally biased toward low complexity: residues 378–399 (SPSA…GSTS) and 407–419 (SSAS…SDGG). Ser414 is subject to Phosphoserine. Phosphothreonine is present on residues Thr441 and Thr448. Tyr460 bears the Phosphotyrosine; by INSR mark. The YXXM motif 1 signature appears at 460 to 463 (YICM). Thr502 carries the post-translational modification Phosphothreonine; by CK2. Residues 520 to 539 (THSAGTSPTISHQKTPSQSS) are disordered. The residue at position 522 (Ser522) is a Phosphoserine; by RPS6KB1. Polar residues predominate over residues 522–539 (SAGTSPTISHQKTPSQSS). 2 short sequence motifs (YXXM motif) span residues 546–549 (YTEM) and 608–611 (YMPM). Tyr608 bears the Phosphotyrosine; by INSR mark. Position 612 is a phosphoserine (Ser612). The residue at position 628 (Tyr628) is a Phosphotyrosine; by INSR. The short motif at 628–631 (YMPM) is the YXXM motif 4 element. Ser632 is subject to Phosphoserine; by RPS6KB1 and ROCK2. Tyr658 carries the post-translational modification Phosphotyrosine. Positions 658 to 661 (YMMM) match the YXXM motif 5 motif. The span at 669-689 (PDIGGGSCSSSSISAAPSGSS) shows a compositional bias: low complexity. Positions 669–720 (PDIGGGSCSSSSISAAPSGSSYGKPWTNGVGGHHTHALPHAKPPVESGGGKL) are disordered. Residues 727 to 730 (YMNM) carry the YXXM motif 6 motif. Residues 766–921 (FKHTQRPGEP…ATSRSSPSVR (156 aa)) form a disordered region. Over residues 771–780 (RPGEPEEGAR) the composition is skewed to basic and acidic residues. 3 stretches are compositionally biased toward low complexity: residues 785–794 (RLSSSSGRLR), 801–810 (DSSSSTSSDS), and 872–881 (QQQQQQQQQQ). Ser789 carries the phosphoserine; by AMPK and SIK2 modification. Residue Ser891 is modified to Phosphoserine. Tyr895, Tyr939, and Tyr987 each carry phosphotyrosine; by INSR. Residues 895 to 897 (YVN) are GRB2-binding. 3 short sequence motifs (YXXM motif) span residues 939 to 942 (YMNM), 987 to 990 (YMTM), and 1010 to 1013 (YADM). The interval 1024 to 1165 (LPRTTGAAPP…SAPGCGAAGG (142 aa)) is disordered. Over residues 1025 to 1046 (PRTTGAAPPPSSTASASASVTP) the composition is skewed to low complexity. Residues 1072–1084 (TRVNLSPNHNQSA) are compositionally biased toward polar residues. Residue Ser1099 is modified to Phosphoserine. The residue at position 1100 (Ser1100) is a Phosphoserine; by RPS6KB1. Positions 1101-1114 (ETFSAPTRAANTVS) are enriched in polar residues. Over residues 1118–1128 (GAAGGGSGGGS) the composition is skewed to gly residues. At Tyr1172 the chain carries Phosphotyrosine; by INSR. Residues 1177-1235 (LVKDVKQHPQDCPSQQQSLPPPPPHQPLGSNEGSSPRRSSEDLSTYASINFQKQPEDRQ) form a disordered region. Lys1179 participates in a covalent cross-link: Glycyl lysine isopeptide (Lys-Gly) (interchain with G-Cter in ubiquitin). Residues 1204-1229 (LGSNEGSSPRRSSEDLSTYASINFQK) show a composition bias toward polar residues. Residue Tyr1222 is modified to Phosphotyrosine; by INSR.

In terms of assembly, interacts with SOCS7. Interacts (via IRS-type PTB domain) with IGF1R and INSR (via the tyrosine-phosphorylated NPXY motif). Interacts with UBTF, FER and PIK3CA. Interacts (via phosphorylated YXXM motifs) with PIK3R1. Interacts with ROCK1. Interacts (via PH domain) with PHIP. Interacts with GRB2. Interacts with ALK. Interacts with EIF2AK2/PKR. Interacts with GKAP1. Interacts with DGKZ in the absence of insulin; insulin stimulation decreases this interaction. Found in a ternary complex with DGKZ and PIP5K1A in the absence of insulin stimulation. Interacts with SQSTM1; the interaction is disrupted by the presence of tensin TNS2. Interacts with NCK1 (via SH2 domain). Interacts with NCK2 (via SH3 domain). Interacts with SH2B1; this interaction enhances leptin-induced activation of the PI3-kinase pathway. Interacts with DVL2; this interaction promotes the Wnt/beta-catenin signaling pathway. Interacts with JAK1. Serine phosphorylation of IRS1 is a mechanism for insulin resistance. Ser-307 phosphorylation inhibits insulin action through disruption of IRS1 interaction with the insulin receptor, and Ser-789 phosphorylation is increased in the liver of insulin-resistant rats. Phosphorylation of Tyr-895 is required for GRB2-binding. Phosphorylated by ALK. Phosphorylated at Ser-265, Ser-302, Ser-632 and Ser-1100 by RPS6KB1; phosphorylation induces accelerated degradation of IRS1. Phosphorylated on tyrosine residues in response to insulin. In skeletal muscles, dephosphorylated on Tyr-608 by TNS2 under anabolic conditions; dephosphorylation results in the proteasomal degradation of IRS1. Post-translationally, ubiquitinated by the Cul7-RING(FBXW8) complex in a mTOR-dependent manner, leading to its degradation: the Cul7-RING(FBXW8) complex recognizes and binds IRS1 previously phosphorylated by S6 kinase (RPS6KB1 or RPS6KB2). Ubiquitinated by TRAF4 through 'Lys-29' linkage; this ubiquitination regulates the interaction of IRS1 with IGFR and IRS1 tyrosine phosphorylation upon IGF1 stimulation. In terms of processing, S-nitrosylation at by BLVRB inhibits its activity.

It is found in the cytoplasm. It localises to the nucleus. Its function is as follows. Signaling adapter protein that participates in the signal transduction from two prominent receptor tyrosine kinases, insulin receptor/INSR and insulin-like growth factor I receptor/IGF1R. Plays therefore an important role in development, growth, glucose homeostasis as well as lipid metabolism. Upon phosphorylation by the insulin receptor, functions as a signaling scaffold that propagates insulin action through binding to SH2 domain-containing proteins including the p85 regulatory subunit of PI3K, NCK1, NCK2, GRB2 or SHP2. Recruitment of GRB2 leads to the activation of the guanine nucleotide exchange factor SOS1 which in turn triggers the Ras/Raf/MEK/MAPK signaling cascade. Activation of the PI3K/AKT pathway is responsible for most of insulin metabolic effects in the cell, and the Ras/Raf/MEK/MAPK is involved in the regulation of gene expression and in cooperation with the PI3K pathway regulates cell growth and differentiation. Acts a positive regulator of the Wnt/beta-catenin signaling pathway through suppression of DVL2 autophagy-mediated degradation leading to cell proliferation. The polypeptide is Insulin receptor substrate 1 (Irs1) (Rattus norvegicus (Rat)).